The sequence spans 253 residues: MGRKFFVGGNWKCNGTSEEVKKIVTLLNEAEVPSEDVVEVVVSPPYVFLPFVKNLLRADFHVAAQNCWVKKGGAFTGEVSAEMLVNLGIPWVILGHSERRALLNESNEFVGDKTAYALSQGLKVIACVGETLEQREAGSTISVVAAQTKAIAEKVSDWTNIVVAYEPVWAIGTGKVASPAQAQEVHFELRKWIKENVGADVAGSVRIIYGGSVNGANSKELAGQPDIDGFLVGGASLKPEFVDIIKSATVKSS.

Residues asparagine 10 and lysine 12 each coordinate substrate. Histidine 96 serves as the catalytic Electrophile. The active-site Proton acceptor is glutamate 166.

This sequence belongs to the triosephosphate isomerase family. In terms of assembly, homodimer.

It localises to the cytoplasm. It catalyses the reaction D-glyceraldehyde 3-phosphate = dihydroxyacetone phosphate. It functions in the pathway carbohydrate biosynthesis; gluconeogenesis. The protein operates within carbohydrate degradation; glycolysis; D-glyceraldehyde 3-phosphate from glycerone phosphate: step 1/1. This chain is Triosephosphate isomerase, cytosolic, found in Coptis japonica (Japanese goldthread).